Consider the following 133-residue polypeptide: Small ribosomal subunit protein uS8 (133 aa).

This sequence belongs to the universal ribosomal protein uS8 family. Part of the 30S ribosomal subunit. Contacts proteins S5 and S12.

One of the primary rRNA binding proteins, it binds directly to 16S rRNA central domain where it helps coordinate assembly of the platform of the 30S subunit. The polypeptide is Small ribosomal subunit protein uS8 (Thermosynechococcus vestitus (strain NIES-2133 / IAM M-273 / BP-1)).